Consider the following 338-residue polypeptide: Ornithine carbamoyltransferase, catabolic (338 aa).

Carbamoyl phosphate is bound by residues 58–61 (STRT), Q85, R109, and 136–139 (HPTQ). L-ornithine-binding positions include N168, D232, and 236–237 (SM). Residues 273-274 (CL) and R318 each bind carbamoyl phosphate.

The protein belongs to the aspartate/ornithine carbamoyltransferase superfamily. OTCase family.

The protein resides in the cytoplasm. It carries out the reaction carbamoyl phosphate + L-ornithine = L-citrulline + phosphate + H(+). Its pathway is amino-acid degradation; L-arginine degradation via ADI pathway; carbamoyl phosphate from L-arginine: step 2/2. Functionally, reversibly catalyzes the transfer of the carbamoyl group from carbamoyl phosphate (CP) to the N(epsilon) atom of ornithine (ORN) to produce L-citrulline. This Streptococcus gordonii (strain Challis / ATCC 35105 / BCRC 15272 / CH1 / DL1 / V288) protein is Ornithine carbamoyltransferase, catabolic.